Here is a 199-residue protein sequence, read N- to C-terminus: Peroxynitrite isomerase (199 aa).

The short motif at Gly20–Gly26 is the GXWXGXG element. His190 is a binding site for heme b.

This sequence belongs to the nitrobindin family. Homodimer. Heme b serves as cofactor.

The enzyme catalyses peroxynitrite = nitrate. It participates in nitrogen metabolism. Its function is as follows. Heme-binding protein able to scavenge peroxynitrite and to protect free L-tyrosine against peroxynitrite-mediated nitration, by acting as a peroxynitrite isomerase that converts peroxynitrite to nitrate. Therefore, this protein likely plays a role in peroxynitrite sensing and in the detoxification of reactive nitrogen and oxygen species (RNS and ROS, respectively). Is able to bind nitric oxide (NO) in vitro, but may act as a sensor of peroxynitrite levels in vivo. This Clavibacter michiganensis subsp. michiganensis (strain NCPPB 382) protein is Peroxynitrite isomerase.